The sequence spans 87 residues: Defensin-like protein 81 (87 aa).

The first 27 residues, 1-27, serve as a signal peptide directing secretion; sequence MTIKKFLPLLLSSLMVYSLILLPIISG. Intrachain disulfides connect C33/C69, C37/C57, C43/C67, and C47/C68.

This sequence belongs to the DEFL family.

The protein resides in the secreted. This chain is Defensin-like protein 81, found in Arabidopsis thaliana (Mouse-ear cress).